The primary structure comprises 263 residues: Ribonuclease 3 (263 aa).

Positions 1–23 (MPHSKNQRKHRHHSHSERRRQPK) are disordered. The RNase III domain occupies 35-164 (FDELLRTLNL…FVGALYLDQG (130 aa)). Residue E77 participates in Mg(2+) binding. Residue D81 is part of the active site. Residues D150 and E153 each contribute to the Mg(2+) site. E153 is an active-site residue. Residues 190 to 259 (DFKSQLQEFI…AQQALITLSQ (70 aa)) form the DRBM domain.

The protein belongs to the ribonuclease III family. As to quaternary structure, homodimer. It depends on Mg(2+) as a cofactor.

It localises to the cytoplasm. The catalysed reaction is Endonucleolytic cleavage to 5'-phosphomonoester.. Its function is as follows. Digests double-stranded RNA. Involved in the processing of primary rRNA transcript to yield the immediate precursors to the large and small rRNAs (23S and 16S). Processes some mRNAs, and tRNAs when they are encoded in the rRNA operon. Processes pre-crRNA and tracrRNA of type II CRISPR loci if present in the organism. The sequence is that of Ribonuclease 3 from Halalkalibacterium halodurans (strain ATCC BAA-125 / DSM 18197 / FERM 7344 / JCM 9153 / C-125) (Bacillus halodurans).